A 610-amino-acid chain; its full sequence is Synaptotagmin-like protein 3 (610 aa).

The RabBD domain maps to 4 to 123 (EIDLSALKEL…IKTGEWFYEE (120 aa)). The tract at residues 219–239 (RQCVGQTERRSQSDTAVNVTT) is disordered. 2 consecutive C2 domains span residues 306–428 (VTGE…TQSF) and 462–603 (RPRK…NLWT).

In terms of assembly, monomer. Binds NRXN1. Binds RAB27A that has been activated by GTP-binding via its N-terminus.

It is found in the endomembrane system. May act as Rab effector protein and play a role in vesicle trafficking. Binds phospholipids in the presence of calcium ions. The protein is Synaptotagmin-like protein 3 (SYTL3) of Homo sapiens (Human).